The sequence spans 925 residues: Neuropilin-2 (925 aa).

Residues 1–22 (MDMFPLTWIFLALYFSGHKVRS) form the signal peptide. At 23–858 (QQDPPCGGRL…EKSWLYTLDP (836 aa)) the chain is on the extracellular side. 3 cysteine pairs are disulfide-bonded: C28–C55, C83–C105, and C149–C175. CUB domains lie at 28–142 (CGGR…YEIF) and 149–267 (CSKN…YYLV). N152 and N157 each carry an N-linked (GlcNAc...) asparagine glycan. 3 residues coordinate Ca(2+): E197, D211, and D252. C208 and C230 form a disulfide bridge. 2 cysteine pairs are disulfide-bonded: C277–C427 and C434–C592. 2 F5/8 type C domains span residues 277 to 427 (CNAP…LFGC) and 434 to 592 (CSNM…VLGC). Polar residues predominate over residues 297-310 (STFSDGRWTPQQSR). Residues 297–317 (STFSDGRWTPQQSRLHGDDNG) form a disordered region. The tract at residues 601–621 (VETLGPTVKSEETTTPYPMDE) is disordered. N-linked (GlcNAc...) asparagine glycosylation is present at N629. The MAM domain occupies 642 to 802 (SGFNCNFDFP…TDVPLENCME (161 aa)). A compositionally biased stretch (acidic residues) spans 820 to 830 (YEDEIDDDYEG). The tract at residues 820–849 (YEDEIDDDYEGDWNNSSSTSGAGSPSSGKE) is disordered. N-linked (GlcNAc...) asparagine glycans are attached at residues N833 and N834. Over residues 835-846 (SSSTSGAGSPSS) the composition is skewed to low complexity. The chain crosses the membrane as a helical span at residues 859–883 (ILITIIAMSSLGVLLGATCAGLLLY). Topologically, residues 884 to 925 (CTCSYSGLSSRSCTTLENYNFELYDGLKHKVKINHQKCCSEA) are cytoplasmic.

It belongs to the neuropilin family. In terms of assembly, heterodimer with NRP1. Binds PLXNB1. Found in certain neuronal populations of the CNS, including dorsal root ganglia, and in other non-neuronal tissues including mesenchymal tissue lining in the ribs.

The protein resides in the membrane. In terms of biological role, high affinity receptor for semaphorins 3C, 3F, VEGF-165 and VEGF-145 isoforms of VEGF, and the PLGF-2 isoform of PGF. This chain is Neuropilin-2 (Nrp2), found in Rattus norvegicus (Rat).